The sequence spans 312 residues: Coproporphyrin III ferrochelatase (312 aa).

Fe-coproporphyrin III-binding positions include tyrosine 13, arginine 30, 46 to 47 (RY), serine 54, and tyrosine 125. Fe(2+)-binding residues include histidine 183 and glutamate 264.

The protein belongs to the ferrochelatase family.

It localises to the cytoplasm. The catalysed reaction is Fe-coproporphyrin III + 2 H(+) = coproporphyrin III + Fe(2+). The protein operates within porphyrin-containing compound metabolism; protoheme biosynthesis. Its function is as follows. Involved in coproporphyrin-dependent heme b biosynthesis. Catalyzes the insertion of ferrous iron into coproporphyrin III to form Fe-coproporphyrin III. This is Coproporphyrin III ferrochelatase from Bacillus pumilus (strain SAFR-032).